The sequence spans 747 residues: Protein tyrosine phosphatase domain-containing protein 1 (747 aa).

A disordered region spans residues 1–36; sequence MAAGVLPQNEDPYSTLVNSSGHAAHMDENSGRPAPK. Positions 11–21 are enriched in polar residues; sequence DPYSTLVNSSG. Residues 82 to 253 enclose the Tyrosine-protein phosphatase domain; sequence YSSWVTDNIL…LAPLRNIFSC (172 aa). The active-site Phosphocysteine intermediate is cysteine 190. Serine 392, serine 394, and serine 543 each carry phosphoserine. The segment at 549 to 570 is disordered; that stretch reads SSPKAQFPHGQETQDSTDLSEA.

The protein belongs to the protein-tyrosine phosphatase family. Non-receptor class PTPDC1 subfamily.

Functionally, may play roles in cilia formation and/or maintenance. The sequence is that of Protein tyrosine phosphatase domain-containing protein 1 (Ptpdc1) from Mus musculus (Mouse).